A 302-amino-acid chain; its full sequence is Ribosomal RNA small subunit methyltransferase H (302 aa).

Residues Gly36–His38, Asp56, Phe84, Asp99, and Gln106 contribute to the S-adenosyl-L-methionine site.

This sequence belongs to the methyltransferase superfamily. RsmH family.

It is found in the cytoplasm. It catalyses the reaction cytidine(1402) in 16S rRNA + S-adenosyl-L-methionine = N(4)-methylcytidine(1402) in 16S rRNA + S-adenosyl-L-homocysteine + H(+). In terms of biological role, specifically methylates the N4 position of cytidine in position 1402 (C1402) of 16S rRNA. This Flavobacterium johnsoniae (strain ATCC 17061 / DSM 2064 / JCM 8514 / BCRC 14874 / CCUG 350202 / NBRC 14942 / NCIMB 11054 / UW101) (Cytophaga johnsonae) protein is Ribosomal RNA small subunit methyltransferase H.